We begin with the raw amino-acid sequence, 103 residues long: Large ribosomal subunit protein bL21 (103 aa).

This sequence belongs to the bacterial ribosomal protein bL21 family. In terms of assembly, part of the 50S ribosomal subunit. Contacts protein L20.

Its function is as follows. This protein binds to 23S rRNA in the presence of protein L20. In Ruthia magnifica subsp. Calyptogena magnifica, this protein is Large ribosomal subunit protein bL21.